The sequence spans 403 residues: Ribonuclease T2-like (403 aa).

A signal peptide spans M1 to C19. 4 disulfides stabilise this stretch: C36–C55, C44–C91, C54–C158, and C99–C150. N78 is a glycosylation site (N-linked (GlcNAc...) asparagine). Catalysis depends on residues H84, E143, and H147. N-linked (GlcNAc...) asparagine glycosylation is present at N175. The cysteines at positions 224 and 259 are disulfide-linked. The segment at P268–E288 is disordered.

It belongs to the RNase T2 family.

The protein localises to the vacuole lumen. It is found in the cytoplasm. It carries out the reaction a ribonucleotidyl-ribonucleotide-RNA + H2O = a 3'-end 3'-phospho-ribonucleotide-RNA + a 5'-end dephospho-ribonucleoside-RNA + H(+). In terms of biological role, rnase which modulates cell survival under stress conditions. Released from the vacuole to the cytoplasm during stress to promote tRNA and rRNA cleavage and to activate separately a downstream pathway that promotes cell death. Involved in cell size, vacuolar morphology and growth at high temperatures and high salt concentration. The sequence is that of Ribonuclease T2-like (RNY1) from Debaryomyces hansenii (strain ATCC 36239 / CBS 767 / BCRC 21394 / JCM 1990 / NBRC 0083 / IGC 2968) (Yeast).